We begin with the raw amino-acid sequence, 269 residues long: Shikimate dehydrogenase (NADP(+)) (269 aa).

Shikimate contacts are provided by residues 15–17 and T62; that span reads SLS. K66 functions as the Proton acceptor in the catalytic mechanism. Shikimate is bound by residues N86 and D99. NADP(+) contacts are provided by residues 123–127, 146–151, and L213; these read GAGGA and NRTTAK. Position 215 (Y215) interacts with shikimate. G236 serves as a coordination point for NADP(+).

It belongs to the shikimate dehydrogenase family. Homodimer.

It carries out the reaction shikimate + NADP(+) = 3-dehydroshikimate + NADPH + H(+). It functions in the pathway metabolic intermediate biosynthesis; chorismate biosynthesis; chorismate from D-erythrose 4-phosphate and phosphoenolpyruvate: step 4/7. Functionally, involved in the biosynthesis of the chorismate, which leads to the biosynthesis of aromatic amino acids. Catalyzes the reversible NADPH linked reduction of 3-dehydroshikimate (DHSA) to yield shikimate (SA). In Methanocella arvoryzae (strain DSM 22066 / NBRC 105507 / MRE50), this protein is Shikimate dehydrogenase (NADP(+)).